A 124-amino-acid chain; its full sequence is Ribonuclease pancreatic (124 aa).

Basic and acidic residues predominate over residues 1–13; that stretch reads KETSAQKFERQHM. The disordered stretch occupies residues 1-25; that stretch reads KETSAQKFERQHMDSTGSSSSSPTY. The substrate site is built by Lys7 and Arg10. His12 serves as the catalytic Proton acceptor. 4 disulfide bridges follow: Cys26–Cys84, Cys40–Cys95, Cys58–Cys110, and Cys65–Cys72. Residues 41–45, Lys66, and Arg85 each bind substrate; that span reads KPVNT. Catalysis depends on His119, which acts as the Proton donor.

Belongs to the pancreatic ribonuclease family. In terms of assembly, monomer. Interacts with and forms tight 1:1 complexes with RNH1. Dimerization of two such complexes may occur. Interaction with RNH1 inhibits this protein. As to expression, pancreas.

It is found in the secreted. It catalyses the reaction an [RNA] containing cytidine + H2O = an [RNA]-3'-cytidine-3'-phosphate + a 5'-hydroxy-ribonucleotide-3'-[RNA].. The catalysed reaction is an [RNA] containing uridine + H2O = an [RNA]-3'-uridine-3'-phosphate + a 5'-hydroxy-ribonucleotide-3'-[RNA].. Endonuclease that catalyzes the cleavage of RNA on the 3' side of pyrimidine nucleotides. Acts on single-stranded and double-stranded RNA. This is Ribonuclease pancreatic (RNASE1) from Ondatra zibethicus (Muskrat).